Here is an 89-residue protein sequence, read N- to C-terminus: Small ribosomal subunit protein uS15 (89 aa).

This sequence belongs to the universal ribosomal protein uS15 family. In terms of assembly, part of the 30S ribosomal subunit. Forms a bridge to the 50S subunit in the 70S ribosome, contacting the 23S rRNA.

In terms of biological role, one of the primary rRNA binding proteins, it binds directly to 16S rRNA where it helps nucleate assembly of the platform of the 30S subunit by binding and bridging several RNA helices of the 16S rRNA. Its function is as follows. Forms an intersubunit bridge (bridge B4) with the 23S rRNA of the 50S subunit in the ribosome. The chain is Small ribosomal subunit protein uS15 from Thermus thermophilus (strain ATCC BAA-163 / DSM 7039 / HB27).